The sequence spans 237 residues: Lectin alpha chain (237 aa).

Residues Glu-8 and Asp-10 each contribute to the Mn(2+) site. Ca(2+) contacts are provided by Asp-10, Tyr-12, Asn-14, and Asp-19. Tyr-12 and Asn-14 together coordinate a carbohydrate. 2 residues coordinate Mn(2+): Asp-19 and His-24. 99–100 contributes to the a carbohydrate binding site; it reads LY. Residue Asp-208 coordinates Ca(2+). Arg-228 contributes to the a carbohydrate binding site.

It belongs to the leguminous lectin family. In terms of assembly, homodimer and homotetramer. Oligomerization is pH-dependent with homotetramers forming at pH 4 and above.

Functionally, D-mannose/D-glucose-binding lectin. Has anti-inflammatory activity in animal models when applied intravenously. Has antinociceptive activity in mice when applied intravenously. The protein is Lectin alpha chain of Canavalia boliviana.